We begin with the raw amino-acid sequence, 446 residues long: Phosphoglucosamine mutase (446 aa).

The Phosphoserine intermediate role is filled by Ser102. Residues Ser102, Asp239, Asp241, and Asp243 each contribute to the Mg(2+) site. Phosphoserine is present on Ser102.

This sequence belongs to the phosphohexose mutase family. Mg(2+) is required as a cofactor. In terms of processing, activated by phosphorylation.

The enzyme catalyses alpha-D-glucosamine 1-phosphate = D-glucosamine 6-phosphate. Functionally, catalyzes the conversion of glucosamine-6-phosphate to glucosamine-1-phosphate. In Solibacter usitatus (strain Ellin6076), this protein is Phosphoglucosamine mutase.